The chain runs to 328 residues: MSASVELKPTEKFSKFLEEYSSVPVRAAIISISNENSFDVKTMVEKSESIESDFKKVRECLLGSEEPAFVLVYDDSKKNLLQLISYVPENANVRRKMLYASSRAAFVRCVTLAKLDESYFASTPEELDYQQIMKSLSKQEDQSPLRQDELERKEYNESMQSSVTHKRPLVTRGVAMSIDDKALKALSDLKSSTENNLVILSIDKEVISLSQEKQNIPPSDVKSFFSSTEPNFAFYSLPKDGSSKILFIYICPMQATVKHRMVYSSSKLGLLDSIKAELGIVIDGKIESNDAADITEKEILHAAGISSPQAETSTTKTGFSRPRPPRRR.

One can recognise an ADF-H 1 domain in the interval Met-1 to Ser-137. At Ser-143 the chain carries Phosphoserine. One can recognise an ADF-H 2 domain in the interval Gly-173–Gly-304. Residues Ala-302–Arg-328 are disordered. A compositionally biased stretch (polar residues) spans Ser-306 to Gly-318.

It belongs to the actin-binding proteins ADF family. Twinfilin subfamily. Interacts with G-actin; ADP-actin form.

It localises to the cytoplasm. Its subcellular location is the cytoskeleton. Actin-binding protein involved in motile and morphological processes. Inhibits actin polymerization, likely by sequestering G-actin. Prevents actin filament assembly by forming a 1:1 complex with actin monomers, and inhibits the nucleotide exchange reaction of actin monomers. This chain is Twinfilin (twf1), found in Schizosaccharomyces pombe (strain 972 / ATCC 24843) (Fission yeast).